The primary structure comprises 344 residues: Ferrochelatase (344 aa).

His-211 and Glu-292 together coordinate Fe cation.

This sequence belongs to the ferrochelatase family.

The protein localises to the cytoplasm. It carries out the reaction heme b + 2 H(+) = protoporphyrin IX + Fe(2+). It participates in porphyrin-containing compound metabolism; protoheme biosynthesis; protoheme from protoporphyrin-IX: step 1/1. Functionally, catalyzes the ferrous insertion into protoporphyrin IX. This chain is Ferrochelatase, found in Methylobacillus flagellatus (strain ATCC 51484 / DSM 6875 / VKM B-1610 / KT).